Here is a 31-residue protein sequence, read N- to C-terminus: Nemertide alpha-5 (31 aa).

Disulfide bonds link Cys-2/Cys-16, Cys-9/Cys-20, and Cys-15/Cys-26. 4-hydroxyproline occurs at positions 28 and 29.

Belongs to the nemertide family. In terms of tissue distribution, confined to the epidermis and to the mucus layer.

The protein resides in the secreted. Highly potent toxin against both insect and some mammalian sodium channels (Nav). It potently inhibits inactivation of insect sodium channels of B.germanica (BgNav1) (EC(50)=7.8 nM) and also delays the inactivation of mammalian Nav with potent activity on Nav1.3/SCN3A and Nav1.4/SCN4A (hNav1.1/SCN1A; EC(50)=102.1 nM, rNav1.2/SCN2A; EC(50)=156.1 nM, rNav1.3/SCN3A; EC(50)=9.4 nM, rNav1.4/SCN4A; EC(50)=15.4 nM, hNav1.5/SCN5A; EC(50)=132.7 nM, mNav1.6/SCN8A; EC(50)=66.9 nM, hNav1.9/SCN9A; EC(50)=73 nM). 1 uM is enough to completely inhibits the inactivation, resulting in sustained non-inactivating currents. In addition, the toxin significantly enhances the recovery from inactivation, and the open state is not required for the toxin to interact with the channel. In vivo, injection into brine shrimp (Artemia salina) stops movement or causes death after 24 hours (EC(50)=0.4 uM). The chain is Nemertide alpha-5 from Ramphogordius pseudolacteus (Ribbon worm).